Consider the following 249-residue polypeptide: MTRKLVLLRHGQSQWNLDNRFTGWVDVDLTEQGRQEAAAAGKLMKDEGLQFDVAYTSVLKRAIHTLQGALKELDQDWLPVHKSWRLNERHYGGLQGLDKAETAAKHGEEQVKIWRRSYDIPPPAMDVTDPGHPGHDRRYATLDRNALPGTESLATTLVRVLPYWHDAIAPQLKAGQTVLVTAHGNSLRALYKYLNDISNAQILELNIPTGIPLLFELDDNLRVQSYRYLGDPEAAKRAAEAVANQGKAK.

Residues 9-16 (RHGQSQWN), 22-23 (TG), Arg61, 88-91 (ERHY), Lys99, 115-116 (RR), and 184-185 (GN) contribute to the substrate site. The active-site Tele-phosphohistidine intermediate is His10. The Proton donor/acceptor role is filled by Glu88.

This sequence belongs to the phosphoglycerate mutase family. BPG-dependent PGAM subfamily. In terms of assembly, homodimer.

The enzyme catalyses (2R)-2-phosphoglycerate = (2R)-3-phosphoglycerate. It participates in carbohydrate degradation; glycolysis; pyruvate from D-glyceraldehyde 3-phosphate: step 3/5. In terms of biological role, catalyzes the interconversion of 2-phosphoglycerate and 3-phosphoglycerate. This Xanthomonas campestris pv. campestris (strain B100) protein is 2,3-bisphosphoglycerate-dependent phosphoglycerate mutase.